Reading from the N-terminus, the 615-residue chain is MILDKVNSPEDLKRLSLEELLLLAEEIRSEIIRVTAQNGGHLASSLGAVELVLALHRVFDSPRDRILFDVGHQAYAHKLVTGRKDRFHTLRKEGGISGFTKVSESPHDAITAGHASTSLANALGMVLARDLMGEDYHVVAVIGDGALTGGMALAALNKIGELQKRMLIVLNDNEMSISENVGALNKYFKELQIRKWVQDAEKLGKNILERISPQLFGLVDRAKEAAKLLLHQENPFYAWGIRYVGPVDGHDLKGLVHILEHLKALDGPTLLHVVTKKGKGYKVAEADPIYWHGPPGFDPKKPEKVSKGYTWSQAFGDAVTELAHMEPRLFVLTPAMREGSGLVRYSLEHPERYLDVGICEDVAVTTAAGLALRGMKPIVAIYSTFLQRAYDQVIHDVAIENLPVVFAIDRAGIVGADGATHHGVFDIAYLRTVPNLQIAAPKDALELRAMLKKALEVGGPVAIRYPRDNVERAPEGVWPEIAWGKWEVLKEGTEAYILAFGKTLKYALEAAGDDPRVGVVNARFLKPLDREMLRALSRYKLLTVEDHQRMGGFGSAVLEALNEMGLKPEVQVLGLPDRFFEHGAIPSLHRQAGIDAEGIRKALAAMGVAVVHERA.

Thiamine diphosphate contacts are provided by residues histidine 72 and 113–115; that span reads GHA. Aspartate 144 provides a ligand contact to Mg(2+). Residues 145 to 146, asparagine 173, tyrosine 281, and glutamate 360 contribute to the thiamine diphosphate site; that span reads GA. Asparagine 173 contributes to the Mg(2+) binding site.

It belongs to the transketolase family. DXPS subfamily. As to quaternary structure, homodimer. Mg(2+) is required as a cofactor. It depends on thiamine diphosphate as a cofactor.

It catalyses the reaction D-glyceraldehyde 3-phosphate + pyruvate + H(+) = 1-deoxy-D-xylulose 5-phosphate + CO2. It participates in metabolic intermediate biosynthesis; 1-deoxy-D-xylulose 5-phosphate biosynthesis; 1-deoxy-D-xylulose 5-phosphate from D-glyceraldehyde 3-phosphate and pyruvate: step 1/1. Catalyzes the acyloin condensation reaction between C atoms 2 and 3 of pyruvate and glyceraldehyde 3-phosphate to yield 1-deoxy-D-xylulose-5-phosphate (DXP). The protein is 1-deoxy-D-xylulose-5-phosphate synthase of Thermus thermophilus (strain ATCC BAA-163 / DSM 7039 / HB27).